The sequence spans 364 residues: UDP-N-acetylglucosamine--N-acetylmuramyl-(pentapeptide) pyrophosphoryl-undecaprenol N-acetylglucosamine transferase 1 (364 aa).

Residues 10 to 12 (TGG), Asn-124, Ser-195, Ile-250, and Gln-295 each bind UDP-N-acetyl-alpha-D-glucosamine.

This sequence belongs to the glycosyltransferase 28 family. MurG subfamily.

Its subcellular location is the cell membrane. The enzyme catalyses di-trans,octa-cis-undecaprenyl diphospho-N-acetyl-alpha-D-muramoyl-L-alanyl-D-glutamyl-meso-2,6-diaminopimeloyl-D-alanyl-D-alanine + UDP-N-acetyl-alpha-D-glucosamine = di-trans,octa-cis-undecaprenyl diphospho-[N-acetyl-alpha-D-glucosaminyl-(1-&gt;4)]-N-acetyl-alpha-D-muramoyl-L-alanyl-D-glutamyl-meso-2,6-diaminopimeloyl-D-alanyl-D-alanine + UDP + H(+). The protein operates within cell wall biogenesis; peptidoglycan biosynthesis. Functionally, cell wall formation. Catalyzes the transfer of a GlcNAc subunit on undecaprenyl-pyrophosphoryl-MurNAc-pentapeptide (lipid intermediate I) to form undecaprenyl-pyrophosphoryl-MurNAc-(pentapeptide)GlcNAc (lipid intermediate II). In Bacillus anthracis, this protein is UDP-N-acetylglucosamine--N-acetylmuramyl-(pentapeptide) pyrophosphoryl-undecaprenol N-acetylglucosamine transferase 1.